Consider the following 73-residue polypeptide: Translation initiation factor IF-1 (73 aa).

The S1-like domain maps to 1-73 (MPKKDGVIEI…SRGRIVYRYK (73 aa)).

It belongs to the IF-1 family. Component of the 30S ribosomal translation pre-initiation complex which assembles on the 30S ribosome in the order IF-2 and IF-3, IF-1 and N-formylmethionyl-tRNA(fMet); mRNA recruitment can occur at any time during PIC assembly.

The protein resides in the cytoplasm. Its function is as follows. One of the essential components for the initiation of protein synthesis. Stabilizes the binding of IF-2 and IF-3 on the 30S subunit to which N-formylmethionyl-tRNA(fMet) subsequently binds. Helps modulate mRNA selection, yielding the 30S pre-initiation complex (PIC). Upon addition of the 50S ribosomal subunit IF-1, IF-2 and IF-3 are released leaving the mature 70S translation initiation complex. The sequence is that of Translation initiation factor IF-1 from Kineococcus radiotolerans (strain ATCC BAA-149 / DSM 14245 / SRS30216).